The chain runs to 480 residues: Protein nucleotidyltransferase YdiU (480 aa).

8 residues coordinate ATP: Gly86, Gly88, Arg89, Lys109, Asp121, Gly122, Arg172, and Arg179. Asp248 serves as the catalytic Proton acceptor. Residues Asn249 and Asp258 each coordinate Mg(2+). Residue Asp258 participates in ATP binding.

It belongs to the SELO family. The cofactor is Mg(2+). Mn(2+) serves as cofactor.

The enzyme catalyses L-seryl-[protein] + ATP = 3-O-(5'-adenylyl)-L-seryl-[protein] + diphosphate. It catalyses the reaction L-threonyl-[protein] + ATP = 3-O-(5'-adenylyl)-L-threonyl-[protein] + diphosphate. It carries out the reaction L-tyrosyl-[protein] + ATP = O-(5'-adenylyl)-L-tyrosyl-[protein] + diphosphate. The catalysed reaction is L-histidyl-[protein] + UTP = N(tele)-(5'-uridylyl)-L-histidyl-[protein] + diphosphate. The enzyme catalyses L-seryl-[protein] + UTP = O-(5'-uridylyl)-L-seryl-[protein] + diphosphate. It catalyses the reaction L-tyrosyl-[protein] + UTP = O-(5'-uridylyl)-L-tyrosyl-[protein] + diphosphate. Its function is as follows. Nucleotidyltransferase involved in the post-translational modification of proteins. It can catalyze the addition of adenosine monophosphate (AMP) or uridine monophosphate (UMP) to a protein, resulting in modifications known as AMPylation and UMPylation. This is Protein nucleotidyltransferase YdiU from Salmonella arizonae (strain ATCC BAA-731 / CDC346-86 / RSK2980).